The sequence spans 172 residues: Adenine phosphoribosyltransferase (172 aa).

The protein belongs to the purine/pyrimidine phosphoribosyltransferase family. Homodimer.

The protein localises to the cytoplasm. It carries out the reaction AMP + diphosphate = 5-phospho-alpha-D-ribose 1-diphosphate + adenine. It participates in purine metabolism; AMP biosynthesis via salvage pathway; AMP from adenine: step 1/1. In terms of biological role, catalyzes a salvage reaction resulting in the formation of AMP, that is energically less costly than de novo synthesis. The sequence is that of Adenine phosphoribosyltransferase from Synechocystis sp. (strain ATCC 27184 / PCC 6803 / Kazusa).